Reading from the N-terminus, the 644-residue chain is uncharacterized protein (644 aa).

The tract at residues 65–117 (DSDVETTGGGGRGSTTSTEDRIDEHDDAIEDDGVSNEEDENQDAEQEQEVDLN) is disordered. Positions 89 to 114 (HDDAIEDDGVSNEEDENQDAEQEQEV) are enriched in acidic residues.

This is an uncharacterized protein from Arabidopsis thaliana (Mouse-ear cress).